Consider the following 464-residue polypeptide: Chitobiosyldiphosphodolichol beta-mannosyltransferase (464 aa).

Over 1–2 the chain is Lumenal; sequence MA. The helical transmembrane segment at 3 to 23 threads the bilayer; that stretch reads ASCLVLLALCLLLPLLLLGGW. The Cytoplasmic segment spans residues 24-99; the sequence is KRWRRGRTAR…ELQSLAVGPR (76 aa). The segment at residues 100-120 is an intramembrane region (helical); sequence VFQYGVKVVFQAMYLLWKLMW. The Cytoplasmic portion of the chain corresponds to 121–464; sequence REPGAYIFLQ…QTVLPLVMDT (344 aa). Phosphoserine is present on Ser242. Residues 242 to 261 are disordered; it reads SPFRARSEPEDPATERSAFT.

It belongs to the glycosyltransferase group 1 family. Glycosyltransferase 33 subfamily.

It is found in the endoplasmic reticulum membrane. It catalyses the reaction an N,N'-diacetylchitobiosyl-diphospho-di-trans,poly-cis-dolichol + GDP-alpha-D-mannose = a beta-D-Man-(1-&gt;4)-beta-D-GlcNAc-(1-&gt;4)-alpha-D-GlcNAc-diphospho-di-trans,poly-cis-dolichol + GDP + H(+). It functions in the pathway protein modification; protein glycosylation. Mannosyltransferase that operates in the biosynthetic pathway of dolichol-linked oligosaccharides, the glycan precursors employed in protein asparagine (N)-glycosylation. The assembly of dolichol-linked oligosaccharides begins on the cytosolic side of the endoplasmic reticulum membrane and finishes in its lumen. The sequential addition of sugars to dolichol pyrophosphate produces dolichol-linked oligosaccharides containing fourteen sugars, including two GlcNAcs, nine mannoses and three glucoses. Once assembled, the oligosaccharide is transferred from the lipid to nascent proteins by oligosaccharyltransferases. Catalyzes, on the cytoplasmic face of the endoplasmic reticulum, the addition of the first mannose residues to the dolichol-linked oligosaccharide chain, to produce Man1GlcNAc(2)-PP-dolichol core oligosaccharide. Man1GlcNAc(2)-PP-dolichol is a substrate for ALG2, the following enzyme in the biosynthetic pathway. The polypeptide is Chitobiosyldiphosphodolichol beta-mannosyltransferase (Pongo abelii (Sumatran orangutan)).